Reading from the N-terminus, the 202-residue chain is Phosphatidyl-N-methylethanolamine N-methyltransferase (202 aa).

Residues 1–12 are Lumenal-facing; that stretch reads MTTLSDYVDFSQ. An intramembrane region (helical) is located at residues 13-33; it reads DSFKYAALSIAFNPIFWNVVA. The Lumenal portion of the chain corresponds to 34–45; that stretch reads RAEYRSHFLTRI. Residues 46–66 form a helical membrane-spanning segment; the sequence is FGSPYRGCYFLAITIFSLGIL. Over 67 to 90 the chain is Cytoplasmic; that stretch reads RDHIYQQALEDQPYYAPVHQPVLG. The helical transmembrane segment at 91–111 threads the bilayer; sequence GALFAVGSVLVLSSMYALGVT. Residue 95 to 97 coordinates S-adenosyl-L-methionine; that stretch reads AVG. The Lumenal portion of the chain corresponds to 112–154; that stretch reads GTYLGDYFGILMDAPVTGFPFNVTGSPMYWGSTLNFLGVALYK. Residues 155–175 form a helical membrane-spanning segment; that stretch reads GKVAGILLTALVFVLYWFALK. Topologically, residues 176 to 202 are cytoplasmic; that stretch reads WEDPFTAEIYAKRERERAKSKRGGKNQ. 177–178 serves as a coordination point for S-adenosyl-L-methionine; that stretch reads ED.

Belongs to the class VI-like SAM-binding methyltransferase superfamily. PEMT/PEM2 methyltransferase family.

Its subcellular location is the endoplasmic reticulum membrane. It localises to the mitochondrion membrane. The catalysed reaction is a 1,2-diacyl-sn-glycero-3-phospho-N-methylethanolamine + S-adenosyl-L-methionine = a 1,2-diacyl-sn-glycero-3-phospho-N,N-dimethylethanolamine + S-adenosyl-L-homocysteine + H(+). It carries out the reaction a 1,2-diacyl-sn-glycero-3-phospho-N,N-dimethylethanolamine + S-adenosyl-L-methionine = a 1,2-diacyl-sn-glycero-3-phosphocholine + S-adenosyl-L-homocysteine + H(+). Its pathway is phospholipid metabolism; phosphatidylcholine biosynthesis. Catalyzes the second two steps of the methylation pathway of phosphatidylcholine biosynthesis, the SAM-dependent methylation of phosphatidylmonomethylethanolamine (PMME) to phosphatidyldimethylethanolamine (PDME) and of PDME to phosphatidylcholine (PC). The protein is Phosphatidyl-N-methylethanolamine N-methyltransferase of Emericella nidulans (strain FGSC A4 / ATCC 38163 / CBS 112.46 / NRRL 194 / M139) (Aspergillus nidulans).